The sequence spans 299 residues: Taste receptor type 2 member 4 (299 aa).

The Extracellular segment spans residues 1 to 9 (MLQLFYFSA). A helical membrane pass occupies residues 10–30 (IIASVILNFVGIIMNLFIMVV). The Cytoplasmic portion of the chain corresponds to 31–46 (NCKTWVKSHRISSSDR). A helical membrane pass occupies residues 47 to 67 (ILFSLGITRFLMLGLFLVNTI). The Extracellular segment spans residues 68 to 81 (FFVSSNTERSVYLS). The helical transmembrane segment at 82-102 (AFFVLCFMFXDSSSLWFVTLL) threads the bilayer. Over 103-131 (NILYCVKITNFQHSVFLLLKQNISPKIPR) the chain is Cytoplasmic. A helical transmembrane segment spans residues 132-152 (LLLACVLISAFTTCLYITLSQ). Residues 153–172 (ASPFPELVTKRNNTSFNTHE) lie on the Extracellular side of the membrane. 2 N-linked (GlcNAc...) asparagine glycosylation sites follow: asparagine 164 and asparagine 165. Residues 173–193 (GILSLVVSLVLSSSLQFIINV) traverse the membrane as a helical segment. Over 194-230 (TSASLLIHSLRRHIQKMQKNATGFWNPQTEAHVGAMK) the chain is Cytoplasmic. A helical transmembrane segment spans residues 231–251 (LMIYFLILYIPYSVATLVQYL). Residues 252 to 262 (PFYVGMDMGTK) lie on the Extracellular side of the membrane. Residues 263–283 (AICLIFATLYSPGHSVLIIIT) form a helical membrane-spanning segment. The Cytoplasmic portion of the chain corresponds to 284–299 (HPKLKTTAKKILCFKK).

It belongs to the G-protein coupled receptor T2R family.

The protein resides in the membrane. The protein localises to the cell projection. It is found in the cilium membrane. Its function is as follows. Gustducin-coupled receptor implicated in the perception of bitter compounds in the oral cavity and the gastrointestinal tract. Signals through PLCB2 and the calcium-regulated cation channel TRPM5. In airway epithelial cells, binding of denatonium increases the intracellular calcium ion concentration and stimulates ciliary beat frequency. The polypeptide is Taste receptor type 2 member 4 (TAS2R4) (Pongo pygmaeus (Bornean orangutan)).